Consider the following 176-residue polypeptide: ATP-dependent protease subunit HslV (176 aa).

T2 is a catalytic residue. Na(+) is bound by residues G157, C160, and T163.

It belongs to the peptidase T1B family. HslV subfamily. In terms of assembly, a double ring-shaped homohexamer of HslV is capped on each side by a ring-shaped HslU homohexamer. The assembly of the HslU/HslV complex is dependent on binding of ATP.

The protein localises to the cytoplasm. The catalysed reaction is ATP-dependent cleavage of peptide bonds with broad specificity.. With respect to regulation, allosterically activated by HslU binding. Its function is as follows. Protease subunit of a proteasome-like degradation complex believed to be a general protein degrading machinery. The sequence is that of ATP-dependent protease subunit HslV from Escherichia coli O139:H28 (strain E24377A / ETEC).